The chain runs to 217 residues: Vesicle transport through interaction with t-SNAREs homolog 1A (217 aa).

The Cytoplasmic portion of the chain corresponds to 1–192; that stretch reads MSSDFEGYEQ…GMLRRIIQNR (192 aa). Coiled-coil stretches lie at residues 31 to 92 and 112 to 178; these read PDEK…KRSR and ENQR…GKSS. The helical; Anchor for type IV membrane protein transmembrane segment at 193-213 threads the bilayer; the sequence is ILLVILGIIVVIAILTAIAFF. Residues 214–217 are Vesicular-facing; the sequence is VKGH.

This sequence belongs to the VTI1 family. As to quaternary structure, interacts with distinct SNARE complexes that contain either STX5 or STX6. Interacts with NAPA and, to a lesser extent, with NAPG. Identified in a complex containing STX6, STX12, VAMP4 and VTI1A. As to expression, widely expressed.

Its subcellular location is the golgi apparatus membrane. V-SNARE that mediates vesicle transport pathways through interactions with t-SNAREs on the target membrane. These interactions are proposed to mediate aspects of the specificity of vesicle trafficking and to promote fusion of the lipid bilayers. Involved in vesicular transport from the late endosomes to the trans-Golgi network. Along with VAMP7, involved in an non-conventional RAB1-dependent traffic route to the cell surface used by KCNIP1 and KCND2. May be concerned with increased secretion of cytokines associated with cellular senescence. The protein is Vesicle transport through interaction with t-SNAREs homolog 1A (Vti1a) of Mus musculus (Mouse).